The primary structure comprises 241 residues: MDSTIRLEESWKAALGPEFRNGYMTELKRFLLDEKQQGRQVFPRGGEYFRALDLTPLDRVRVVILGQDPYHGDGQAHGLCFSVRPGVRTPPSLVNIYKELKEDLGIDPARHGFLESWARQGVLLLNSVLTVERGRAASHQGRGWERFTDAVIRAVNEQAQPVVFMLWGSYAQRKAAFVDRSRHLVLTAPHPSPLSAHSGFFGCRHFSKANAFLTSKGLDPIDWRLPEDPPLAVERPTPPNC.

The Proton acceptor role is filled by Asp68.

Belongs to the uracil-DNA glycosylase (UDG) superfamily. UNG family.

It localises to the cytoplasm. The enzyme catalyses Hydrolyzes single-stranded DNA or mismatched double-stranded DNA and polynucleotides, releasing free uracil.. Functionally, excises uracil residues from the DNA which can arise as a result of misincorporation of dUMP residues by DNA polymerase or due to deamination of cytosine. The protein is Uracil-DNA glycosylase of Sinorhizobium medicae (strain WSM419) (Ensifer medicae).